The primary structure comprises 1325 residues: ATP-binding cassette sub-family C member 4 (1325 aa).

One can recognise an ABC transmembrane type-1 1 domain in the interval 92 to 377 (YLVLGIFTLI…FFPSAIERVS (286 aa)). 7 consecutive transmembrane segments (helical) span residues 93-113 (LVLG…PIFL), 136-156 (AYAT…HLYF), 207-227 (QVTV…AVTA), 228-248 (LLWM…IILL), 328-348 (SKII…VITA), 351-371 (VFVA…FFPS), and 440-460 (LLAV…AVLG). One can recognise an ABC transporter 1 domain in the interval 410-633 (VHVQDFTAFW…GIDFGSLLKK (224 aa)). 445 to 452 (GPVGAGKS) lines the ATP pocket. Phosphothreonine is present on residues Thr-646 and Thr-648. A compositionally biased stretch (low complexity) spans 657–667 (SSVWSQQSSRP). Residues 657-688 (SSVWSQQSSRPSLKDGALESQDTENVPVTLSE) are disordered. Phosphoserine is present on residues Ser-664 and Ser-668. Residues 710–730 (HWIVFIFLILLNTAAQVAYVL) form a helical membrane-spanning segment. In terms of domain architecture, ABC transmembrane type-1 2 spans 714 to 1005 (FIFLILLNTA…CVRQSAEVEN (292 aa)). 2 N-linked (GlcNAc...) asparagine glycosylation sites follow: Asn-746 and Asn-754. A run of 6 helical transmembrane segments spans residues 771 to 791 (LTVA…YVLV), 836 to 856 (LPLT…VVSV), 858 to 878 (VAVI…FIFL), 954 to 974 (AICA…AKTL), 977 to 997 (GQVG…QWCV), and 1038 to 1058 (EGVI…PLVL). Residues 1041-1274 (IIFDNVNFMY…KESLFYKMVQ (234 aa)) enclose the ABC transporter 2 domain. Position 1075-1082 (1075-1082 (GRTGAGKS)) interacts with ATP. The PDZ-binding signature appears at 1322 to 1325 (ETAL).

Belongs to the ABC transporter superfamily. ABCC family. Conjugate transporter (TC 3.A.1.208) subfamily. In terms of assembly, interacts (via PDZ-binding motif) with SNX27 (via PDZ domain); this interaction accelerates MRP4 internalization. It depends on Mg(2+) as a cofactor. N-glycosylated; leading to substrate-selective effects on its transport activity. In terms of tissue distribution, widely expressed, with particularly high levels in prostate, but is barely detectable in liver. sinusoidal membrane of hepatocytes.

It localises to the basolateral cell membrane. Its subcellular location is the apical cell membrane. The enzyme catalyses ATP + H2O + xenobioticSide 1 = ADP + phosphate + xenobioticSide 2.. It catalyses the reaction an S-substituted glutathione(in) + ATP + H2O = an S-substituted glutathione(out) + ADP + phosphate + H(+). It carries out the reaction 17beta-estradiol 17-O-(beta-D-glucuronate)(in) + ATP + H2O = 17beta-estradiol 17-O-(beta-D-glucuronate)(out) + ADP + phosphate + H(+). The catalysed reaction is dehydroepiandrosterone 3-sulfate(in) + ATP + H2O = dehydroepiandrosterone 3-sulfate(out) + ADP + phosphate + H(+). The enzyme catalyses leukotriene C4(in) + ATP + H2O = leukotriene C4(out) + ADP + phosphate + H(+). It catalyses the reaction leukotriene B4(in) + ATP + H2O = leukotriene B4(out) + ADP + phosphate + H(+). It carries out the reaction urate(in) + ATP + H2O = urate(out) + ADP + phosphate + H(+). The catalysed reaction is 3',5'-cyclic GMP(in) + ATP + H2O = 3',5'-cyclic GMP(out) + ADP + phosphate + H(+). The enzyme catalyses 3',5'-cyclic AMP(in) + ATP + H2O = 3',5'-cyclic AMP(out) + ADP + phosphate + H(+). It catalyses the reaction prostaglandin E2(in) + ATP + H2O = prostaglandin E2(out) + ADP + phosphate + H(+). It carries out the reaction prostaglandin E1(in) + ATP + H2O = prostaglandin E1(out) + ADP + phosphate + H(+). The catalysed reaction is glycodeoxycholate(in) + glutathione(in) + ATP + H2O = glycodeoxycholate(out) + glutathione(out) + ADP + phosphate + H(+). The enzyme catalyses cholate(in) + glutathione(in) + ATP + H2O = cholate(out) + glutathione(out) + ADP + phosphate + H(+). It catalyses the reaction glycocholate(in) + glutathione(in) + ATP + H2O = glycocholate(out) + glutathione(out) + ADP + phosphate + H(+). It carries out the reaction taurocholate(in) + glutathione(in) + ATP + H2O = taurocholate(out) + glutathione(out) + ADP + phosphate + H(+). The catalysed reaction is glycochenodeoxycholate(in) + glutathione(in) + ATP + H2O = glycochenodeoxycholate(out) + glutathione(out) + ADP + phosphate + H(+). The enzyme catalyses taurochenodeoxycholate(in) + glutathione(in) + ATP + H2O = taurochenodeoxycholate(out) + glutathione(out) + ADP + phosphate + H(+). It catalyses the reaction glycoursodeoxycholate(in) + glutathione(in) + ATP + H2O = glycoursodeoxycholate(out) + glutathione(out) + ADP + phosphate + H(+). It carries out the reaction tauroursodeoxycholate(in) + glutathione(in) + ATP + H2O = tauroursodeoxycholate(out) + glutathione(out) + ADP + phosphate + H(+). GSH stimulates the transport of MRP4. Urate inhibits methotrexate transport but stimulates cGMP transport. Nonsteroidal anti-inflammatory drugs (NSAIDs) strongly suppress the transport of MRP4 substrates. ATP-dependent transporter of the ATP-binding cassette (ABC) family that actively extrudes physiological compounds and xenobiotics from cells. Transports a range of endogenous molecules that have a key role in cellular communication and signaling, including cyclic nucleotides such as cyclic AMP (cAMP) and cyclic GMP (cGMP), bile acids, steroid conjugates, urate, and prostaglandins. Mediates the ATP-dependent efflux of glutathione conjugates such as leukotriene C4 (LTC4) and leukotriene B4 (LTB4) too. The presence of GSH is necessary for the ATP-dependent transport of LTB4, whereas GSH is not required for the transport of LTC4. Mediates the cotransport of bile acids with reduced glutathione (GSH). Transports a wide range of drugs and their metabolites, including anticancer, antiviral and antibiotics molecules. Confers resistance to anticancer agents such as methotrexate. This chain is ATP-binding cassette sub-family C member 4 (ABCC4), found in Homo sapiens (Human).